The following is a 276-amino-acid chain: NH(3)-dependent NAD(+) synthetase (276 aa).

43–50 (GISGGVDS) lines the ATP pocket. Residue D49 coordinates Mg(2+). R146 contacts deamido-NAD(+). T166 provides a ligand contact to ATP. E171 contributes to the Mg(2+) binding site. Residues K179 and D186 each contribute to the deamido-NAD(+) site. ATP is bound by residues K195 and T217. 266–267 (HK) is a deamido-NAD(+) binding site.

Belongs to the NAD synthetase family. In terms of assembly, homodimer.

It catalyses the reaction deamido-NAD(+) + NH4(+) + ATP = AMP + diphosphate + NAD(+) + H(+). It functions in the pathway cofactor biosynthesis; NAD(+) biosynthesis; NAD(+) from deamido-NAD(+) (ammonia route): step 1/1. Functionally, catalyzes the ATP-dependent amidation of deamido-NAD to form NAD. Uses ammonia as a nitrogen source. This is NH(3)-dependent NAD(+) synthetase from Shewanella putrefaciens (strain CN-32 / ATCC BAA-453).